The following is a 175-amino-acid chain: MSIFSIVTAPDERLKQKSKPVLECTDQTRKFMHDMLETMYNADGAGLAAVQVGILLRILVIDIKEYDPVERPKDFYPLFIVNPEIIEKSTELVTANEGCISLPKQRIEVTRPESVKIRYLDYHGKSQELKANDWLARVIQHEYDHLEGKLMVDYLSNLKRDVVLRKLKKLKNNIV.

Cys99 and His141 together coordinate Fe cation. Residue Glu142 is part of the active site. His145 contributes to the Fe cation binding site.

Belongs to the polypeptide deformylase family. Fe(2+) is required as a cofactor.

It catalyses the reaction N-terminal N-formyl-L-methionyl-[peptide] + H2O = N-terminal L-methionyl-[peptide] + formate. In terms of biological role, removes the formyl group from the N-terminal Met of newly synthesized proteins. Requires at least a dipeptide for an efficient rate of reaction. N-terminal L-methionine is a prerequisite for activity but the enzyme has broad specificity at other positions. The protein is Peptide deformylase of Rickettsia prowazekii (strain Madrid E).